A 296-amino-acid chain; its full sequence is 33 kDa chaperonin (296 aa).

2 cysteine pairs are disulfide-bonded: Cys238–Cys240 and Cys271–Cys274.

Belongs to the HSP33 family. Post-translationally, under oxidizing conditions two disulfide bonds are formed involving the reactive cysteines. Under reducing conditions zinc is bound to the reactive cysteines and the protein is inactive.

The protein resides in the cytoplasm. Functionally, redox regulated molecular chaperone. Protects both thermally unfolding and oxidatively damaged proteins from irreversible aggregation. Plays an important role in the bacterial defense system toward oxidative stress. The chain is 33 kDa chaperonin from Clostridium botulinum (strain Okra / Type B1).